The primary structure comprises 203 residues: Glycerol-3-phosphate acyltransferase (203 aa).

4 helical membrane-spanning segments follow: residues 7 to 27, 82 to 102, 118 to 138, and 141 to 161; these read TLLM…VLVC, AVSL…PVFF, APIG…LLLI, and YSSL…WWLD.

It belongs to the PlsY family. In terms of assembly, probably interacts with PlsX.

The protein resides in the cell inner membrane. It catalyses the reaction an acyl phosphate + sn-glycerol 3-phosphate = a 1-acyl-sn-glycero-3-phosphate + phosphate. The protein operates within lipid metabolism; phospholipid metabolism. Functionally, catalyzes the transfer of an acyl group from acyl-phosphate (acyl-PO(4)) to glycerol-3-phosphate (G3P) to form lysophosphatidic acid (LPA). This enzyme utilizes acyl-phosphate as fatty acyl donor, but not acyl-CoA or acyl-ACP. This is Glycerol-3-phosphate acyltransferase from Shewanella baltica (strain OS223).